We begin with the raw amino-acid sequence, 61 residues long: Photosystem II reaction center protein K (61 aa).

Positions M1–A24 are excised as a propeptide. A helical membrane pass occupies residues I32 to F52.

The protein belongs to the PsbK family. PSII is composed of 1 copy each of membrane proteins PsbA, PsbB, PsbC, PsbD, PsbE, PsbF, PsbH, PsbI, PsbJ, PsbK, PsbL, PsbM, PsbT, PsbX, PsbY, PsbZ, Psb30/Ycf12, at least 3 peripheral proteins of the oxygen-evolving complex and a large number of cofactors. It forms dimeric complexes.

Its subcellular location is the plastid. The protein localises to the chloroplast thylakoid membrane. Functionally, one of the components of the core complex of photosystem II (PSII). PSII is a light-driven water:plastoquinone oxidoreductase that uses light energy to abstract electrons from H(2)O, generating O(2) and a proton gradient subsequently used for ATP formation. It consists of a core antenna complex that captures photons, and an electron transfer chain that converts photonic excitation into a charge separation. The chain is Photosystem II reaction center protein K from Oryza nivara (Indian wild rice).